We begin with the raw amino-acid sequence, 520 residues long: Laccase-1 (520 aa).

A signal peptide spans Met1–Ala21. Plastocyanin-like domains lie at Ile23–Tyr148 and Val160–Tyr302. 2 N-linked (GlcNAc...) asparagine glycosylation sites follow: Asn72 and Asn75. Residues His85, His87, His130, and His132 each coordinate Cu cation. 2 disulfide bridges follow: Cys106/Cys509 and Cys138/Cys226. 4 N-linked (GlcNAc...) asparagine glycosylation sites follow: Asn229, Asn238, Asn354, and Asn361. The Plastocyanin-like 3 domain occupies Thr369–Asp491. Cu cation is bound by residues His416, His419, His421, His473, Cys474, His475, and His479.

Belongs to the multicopper oxidase family. As to quaternary structure, homodimer. Requires Cu cation as cofactor.

It is found in the secreted. It carries out the reaction 4 hydroquinone + O2 = 4 benzosemiquinone + 2 H2O. Its function is as follows. Lignin degradation and detoxification of lignin-derived products. This chain is Laccase-1, found in Trametes villosa (White-rot fungus).